The sequence spans 420 residues: Glycerol-3-phosphate dehydrogenase [NAD(+)] 2, chloroplastic (420 aa).

Residues 1-45 constitute a chloroplast transit peptide; it reads MAASVQPACLDLHFSGKHPPLLKHNAIIVRCVSSPNVIPEADSIS. Residues 94–99, F171, K194, and A228 contribute to the NAD(+) site; that span reads GGGSFG. K194 serves as a coordination point for substrate. Residue K279 is the Proton acceptor of the active site. Positions 343 and 369 each coordinate NAD(+). 343-344 is a binding site for substrate; it reads RN.

It belongs to the NAD-dependent glycerol-3-phosphate dehydrogenase family.

It localises to the plastid. Its subcellular location is the chloroplast. It carries out the reaction sn-glycerol 3-phosphate + NAD(+) = dihydroxyacetone phosphate + NADH + H(+). The protein operates within membrane lipid metabolism; glycerophospholipid metabolism. Its function is as follows. Required to supply glycerol-3-phosphate in the chloroplast for the synthesis of glycerolipids. Required for activation of systemic acquired resistance (SAR). Provision of glycerol-3-phosphate may be involved in generating lipid signals necessary for mediating defense responses and SAR. The protein is Glycerol-3-phosphate dehydrogenase [NAD(+)] 2, chloroplastic (GLY1) of Arabidopsis thaliana (Mouse-ear cress).